Reading from the N-terminus, the 1582-residue chain is SET-binding protein (1582 aa).

Disordered regions lie at residues Met1–Gly76, Ile124–Ala246, Leu278–Ser416, and Ser446–Glu513. Polar residues predominate over residues Glu18 to Ser27. Residues Gly57–Val74 show a composition bias toward basic and acidic residues. Polar residues-rich tracts occupy residues Ile126 to Ser141 and Met213 to Phe229. Low complexity predominate over residues Leu278–Ser298. A compositionally biased stretch (basic and acidic residues) spans Glu356 to Tyr365. The segment covering Asp368–Asn388 has biased composition (polar residues). The segment covering Gly450 to Glu465 has biased composition (basic and acidic residues). Positions Lys575 to Leu587 form a DNA-binding region, a.T hook 1. 2 disordered regions span residues Gly595–Arg617 and Arg709–Glu787. The span at Leu770–Glu787 shows a compositional bias: polar residues. Residue Lys808 is modified to N6-acetyllysine. The segment covering Ser845 to Asp871 has biased composition (polar residues). The interval Ser845–Arg880 is disordered. The segment at residues Lys1007 to Thr1019 is a DNA-binding region (a.T hook 2). Disordered stretches follow at residues Val1128–Leu1155, Ser1182–Asn1215, Ala1236–Glu1265, Gln1429–Met1461, Leu1470–Ser1489, and Glu1507–Pro1582. The segment covering Arg1137–Lys1150 has biased composition (basic residues). Residues Ser1182 to Lys1196 show a composition bias toward basic and acidic residues. The span at Val1439–Lys1448 shows a compositional bias: basic residues. Residues Lys1440–Gln1452 constitute a DNA-binding region (a.T hook 3). 2 stretches are compositionally biased toward pro residues: residues Pro1509 to Pro1533 and Gln1546 to Leu1559.

In terms of assembly, interacts with SET.

Its subcellular location is the nucleus. In Mus musculus (Mouse), this protein is SET-binding protein (Setbp1).